The primary structure comprises 249 residues: tRNA pseudouridine synthase A (249 aa).

Aspartate 53 (nucleophile) is an active-site residue. Tyrosine 111 provides a ligand contact to substrate.

Belongs to the tRNA pseudouridine synthase TruA family. As to quaternary structure, homodimer.

The catalysed reaction is uridine(38/39/40) in tRNA = pseudouridine(38/39/40) in tRNA. Formation of pseudouridine at positions 38, 39 and 40 in the anticodon stem and loop of transfer RNAs. In Streptococcus suis (strain 05ZYH33), this protein is tRNA pseudouridine synthase A.